The following is a 299-amino-acid chain: 4-hydroxy-tetrahydrodipicolinate synthase (299 aa).

Residue Thr-44 participates in pyruvate binding. Tyr-133 (proton donor/acceptor) is an active-site residue. Lys-162 functions as the Schiff-base intermediate with substrate in the catalytic mechanism. Ile-204 lines the pyruvate pocket.

This sequence belongs to the DapA family. As to quaternary structure, homotetramer; dimer of dimers.

The protein resides in the cytoplasm. It carries out the reaction L-aspartate 4-semialdehyde + pyruvate = (2S,4S)-4-hydroxy-2,3,4,5-tetrahydrodipicolinate + H2O + H(+). Its pathway is amino-acid biosynthesis; L-lysine biosynthesis via DAP pathway; (S)-tetrahydrodipicolinate from L-aspartate: step 3/4. Its function is as follows. Catalyzes the condensation of (S)-aspartate-beta-semialdehyde [(S)-ASA] and pyruvate to 4-hydroxy-tetrahydrodipicolinate (HTPA). This Thermus thermophilus (strain ATCC BAA-163 / DSM 7039 / HB27) protein is 4-hydroxy-tetrahydrodipicolinate synthase.